A 446-amino-acid chain; its full sequence is Phosphoglucosamine mutase (446 aa).

Serine 100 functions as the Phosphoserine intermediate in the catalytic mechanism. Mg(2+) contacts are provided by serine 100, aspartate 241, aspartate 243, and aspartate 245. The residue at position 100 (serine 100) is a Phosphoserine.

This sequence belongs to the phosphohexose mutase family. It depends on Mg(2+) as a cofactor. In terms of processing, activated by phosphorylation.

The catalysed reaction is alpha-D-glucosamine 1-phosphate = D-glucosamine 6-phosphate. In terms of biological role, catalyzes the conversion of glucosamine-6-phosphate to glucosamine-1-phosphate. The sequence is that of Phosphoglucosamine mutase from Methylobacterium nodulans (strain LMG 21967 / CNCM I-2342 / ORS 2060).